Consider the following 269-residue polypeptide: uncharacterized protein (269 aa).

This is an uncharacterized protein from Schizosaccharomyces pombe (strain 972 / ATCC 24843) (Fission yeast).